A 356-amino-acid polypeptide reads, in one-letter code: Carbohydrate sulfotransferase 10 (356 aa).

Topologically, residues 1 to 6 (MHHQWL) are cytoplasmic. Residues 7-27 (LLAACFWVIFMFMVASKFITL) traverse the membrane as a helical; Signal-anchor for type II membrane protein segment. Residues 28 to 356 (TFKDPDGYSA…GYQKPDFLLN (329 aa)) lie on the Lumenal side of the membrane. Asn-99 is a glycosylation site (N-linked (GlcNAc...) asparagine). Residues 127–133 (PKVGNTQ) and 189–197 (RDPFERLIS) contribute to the 3'-phosphoadenylyl sulfate site. N-linked (GlcNAc...) asparagine glycosylation is found at Asn-228 and Asn-316.

It belongs to the sulfotransferase 2 family.

The protein localises to the golgi apparatus membrane. The enzyme catalyses 3-O-{beta-D-GlcA-(1-&gt;[3)-alpha-D-Xyl-(1-&gt;3)-beta-D-GlcA-(1-&gt;](n)-4)-beta-D-Xyl-(1-&gt;4)-Rib-ol-P-Rib-ol-P-3-beta-D-GalNAc-(1-&gt;3)-beta-D-GlcNAc-(1-&gt;4)-O-6-P-alpha-D-Man}-L-Thr-[protein] + 3'-phosphoadenylyl sulfate = 3-O-{O-3-S-beta-D-GlcA-(1-&gt;[3)-alpha-D-Xyl-(1-&gt;3)-beta-D-GlcA-(1-&gt;](n)-4)-beta-D-Xyl-(1-&gt;4)-Rib-ol-P-Rib-ol-P-3-beta-D-GalNAc-(1-&gt;3)-beta-D-GlcNAc-(1-&gt;4)-O-6-P-alpha-D-Man}-L-Thr-[protein] + adenosine 3',5'-bisphosphate + H(+). It carries out the reaction 17beta-estradiol 3-O-(beta-D-glucuronate) + 3'-phosphoadenylyl sulfate = 17beta-estradiol 3-O-(3-sulfo-beta-D-glucuronate) + adenosine 3',5'-bisphosphate + H(+). The catalysed reaction is 17beta-estradiol 3-O-(beta-D-glucuronate) 17-sulfate + 3'-phosphoadenylyl sulfate = 17beta-estradiol 3-O-(3-sulfo-beta-D-glucuronate) 17-sulfate + adenosine 3',5'-bisphosphate + H(+). It catalyses the reaction 17beta-estradiol 17-O-(beta-D-glucuronate) + 3'-phosphoadenylyl sulfate = 17beta-estradiol 17-O-(3-sulfo-beta-D-glucuronate) + adenosine 3',5'-bisphosphate + H(+). The enzyme catalyses 16alpha,17beta-estriol 3-O-(beta-D-glucuronate) + 3'-phosphoadenylyl sulfate = 16alpha,17beta-estriol 3-O-(3-sulfo-beta-D-glucuronate) + adenosine 3',5'-bisphosphate + H(+). It carries out the reaction 16alpha,17beta-estriol 16-O-(beta-D-glucuronate) + 3'-phosphoadenylyl sulfate = 16alpha,17beta-estriol 16-O-(3-sulfo-beta-D-glucuronate) + adenosine 3',5'-bisphosphate + H(+). The catalysed reaction is 16alpha,17beta-estriol 17-O-(beta-D-glucuronate) + 3'-phosphoadenylyl sulfate = 16alpha,17beta-estriol 17-O-(3-sulfo-beta-D-glucuronate) + adenosine 3',5'-bisphosphate + H(+). It catalyses the reaction estrone 3-O-(beta-D-glucuronate) + 3'-phosphoadenylyl sulfate = estrone 3-O-(3-sulfo-beta-D-glucuronate) + adenosine 3',5'-bisphosphate + H(+). The enzyme catalyses 3alpha,20alpha-dihydroxy-5beta-pregnane 3-O-(beta-D-glucuronate) + 3'-phosphoadenylyl sulfate = 3alpha,20alpha-dihydroxy-5beta-pregnane 3-O-(3-sulfo-beta-D-glucuronate) + adenosine 3',5'-bisphosphate + H(+). It carries out the reaction testosterone 17-O-(beta-D-glucuronate) + 3'-phosphoadenylyl sulfate = testosterone 17-O-(3-sulfo-beta-D-glucuronate) + adenosine 3',5'-bisphosphate + H(+). The catalysed reaction is 3beta-androst-5-en-17-one 3-O-(beta-D-glucuronate) + 3'-phosphoadenylyl sulfate = 3beta-androst-5-en-17-one 3-O-(3-sulfo-beta-D-glucuronate) + adenosine 3',5'-bisphosphate + H(+). It catalyses the reaction 3alpha,17alpha-dihydroxy-5beta-androstane-11-one-17beta-carboxylate 3-O-(beta-D-glucuronate) + 3'-phosphoadenylyl sulfate = 3alpha,17alpha-dihydroxy-5beta-androstane-11-one-17beta-carboxylate 3-O-(3-sulfo-beta-D-glucuronate) + adenosine 3',5'-bisphosphate + H(+). The enzyme catalyses 3alpha-hydroxyetiocholan-17-one 3-O-(beta-D-glucuronate) + 3'-phosphoadenylyl sulfate = 3alpha-hydroxyetiocholan-17-one 3-O-(3-sulfo-beta-D-glucuronate) + adenosine 3',5'-bisphosphate + H(+). Its pathway is steroid metabolism. It functions in the pathway protein modification; carbohydrate sulfation. In terms of biological role, catalyzes the transfer of sulfate from 3'-phosphoadenylyl sulfate (PAPS) to position 3 of terminal glucuronic acid of both protein- and lipid-linked oligosaccharides. Participates in biosynthesis of HNK-1 carbohydrate structure 3-O-sulfo-beta-D-GlcA-(1-&gt;3)-beta-D-Gal-(1-&gt;4)-D-GlcNAc-R, a sulfated glucuronyl-lactosaminyl residue carried by many neural recognition molecules, which is involved in cell interactions during ontogenetic development and in synaptic plasticity in the adult. May be indirectly involved in synapse plasticity of the hippocampus, via its role in HNK-1 biosynthesis. Sulfates terminal glucuronyl residue of the laminin globular (LG)-domain binding epitope on DAG1/alpha-dystroglycan and prevents further polymerization by LARGE1 glycosyltransferase. Likely defines the chain length of LG epitope, conferring binding specificity to extracellular matrix components. Plays a role in down-regulating the steroid hormones. Sulfates glucuronidated estrogens and androgens with an impact in hormone cycle and fertility. Has a preference for glucuronyl moiety at the 3-hydroxyl group of a sterol ring rather than the 17-hydroxyl group, showing high catalytic efficiency for 17beta-estradiol 3-O-(beta-D-glucuronate) and dehydroepiandrosterone 3-O-(beta-D-glucuronate) hormones. The chain is Carbohydrate sulfotransferase 10 from Mus musculus (Mouse).